An 80-amino-acid chain; its full sequence is MKVSCEDINGPRSSLSRAWNHMSWLYYQYLLVTALYMLEPWERTIFNSMLVSIVGMALYTGYIFMPQHILAILHYFEIVQ.

Residues 1-21 (MKVSCEDINGPRSSLSRAWNH) are Cytoplasmic-facing. The helical transmembrane segment at 22–38 (MSWLYYQYLLVTALYML) threads the bilayer. The Lumenal segment spans residues 39-43 (EPWER). The chain crosses the membrane as a helical span at residues 44–66 (TIFNSMLVSIVGMALYTGYIFMP). Topologically, residues 67-80 (QHILAILHYFEIVQ) are cytoplasmic.

The protein belongs to the SPTSS family. SPTSSA subfamily. In terms of assembly, component of the serine palmitoyltransferase (SPT) complex, which is composed of SPTLC1, SPTLC2 or SPTLC3 and SPTSSA or SPTSSB. The heterodimer consisting of SPTLC1 and SPTLC2/SPTLC3 forms the catalytic core of the enzyme, while SPTSSA or SPTSSB subunits determine substrate specificity. SPT also interacts with ORMDL proteins, especially ORMDL3, which negatively regulate SPT activity in the presence of ceramides.

It localises to the endoplasmic reticulum membrane. It functions in the pathway lipid metabolism; sphingolipid metabolism. In terms of biological role, component of the serine palmitoyltransferase multisubunit enzyme (SPT) that catalyzes the initial and rate-limiting step in sphingolipid biosynthesis by condensing L-serine and activated acyl-CoA (most commonly palmitoyl-CoA) to form long-chain bases. The SPT complex is composed of SPTLC1, SPTLC2 or SPTLC3 and SPTSSA or SPTSSB. Within this complex, the heterodimer consisting of SPTLC1 and SPTLC2/SPTLC3 forms the catalytic core. Within the SPT complex, SPTSSA stimulates the catalytic activity and plays a role in substrate specificity, which depends upon the overall complex composition. The SPTLC1-SPTLC2-SPTSSA complex shows a strong preference for C16-CoA substrate, while the SPTLC1-SPTLC3-SPTSSA isozyme uses both C14-CoA and C16-CoA as substrates, with a slight preference for C14-CoA. Independently of its action as a SPT component, may be involved in MBOAT7 localization to mitochondria-associated membranes, a membrane bridge between the endoplasmic reticulum and mitochondria, may hence affect MBOAT7-catalyzed incorporation of arachidonic acid into phosphatidylinositol. The chain is Serine palmitoyltransferase small subunit A (sptssa) from Xenopus tropicalis (Western clawed frog).